The chain runs to 1682 residues: Calmodulin-binding transcription activator 1 (1682 aa).

Positions 63–188 (KCSSLPKERH…YLNVPAIEDC (126 aa)) form a DNA-binding region, CG-1. The short motif at 112–119 (RKKVKYRK) is the Nuclear localization signal element. 2 disordered regions span residues 284–375 (RIIS…MVDS) and 599–622 (SSFS…FLQD). The span at 302 to 327 (EVQHNDVSEGKHEPSHGRSTSREKRN) shows a compositional bias: basic and acidic residues. Polar residues-rich tracts occupy residues 337–367 (HQNS…SGLN) and 599–618 (SSFS…SPSF). In terms of domain architecture, IPT/TIG spans 877–955 (DYSPEWSYPE…ISNSVVFEYK (79 aa)). A disordered region spans residues 992–1020 (MAEMTGSQQHKQASGGGGSGSGSGSGAGG). A compositionally biased stretch (gly residues) spans 1005–1020 (SGGGGSGSGSGSGAGG). ANK repeat units follow at residues 1066–1095 (RGMT…KHAD), 1111–1141 (FSCT…AISI), and 1145–1174 (LGRL…DEQA). Disordered regions lie at residues 1217–1249 (ASTN…KKHK) and 1267–1318 (LSLE…SASQ). A compositionally biased stretch (polar residues) spans 1268-1291 (SLEQPNIRKQSPRSKQPSPETISP). The span at 1308–1318 (ETAASQASASQ) shows a compositional bias: low complexity. 3 consecutive IQ domains span residues 1549–1585 (QEVA…AAIL), 1586–1608 (IQSK…AAVL), and 1609–1631 (IQNF…TAVI).

It belongs to the CAMTA family. As to quaternary structure, may interact with calmodulin.

It localises to the nucleus. The protein localises to the cytoplasm. Transcriptional activator. The protein is Calmodulin-binding transcription activator 1 of Mus musculus (Mouse).